The primary structure comprises 423 residues: Diaminobutyrate--2-oxoglutarate transaminase (423 aa).

K271 carries the N6-(pyridoxal phosphate)lysine modification.

Belongs to the class-III pyridoxal-phosphate-dependent aminotransferase family. Requires pyridoxal 5'-phosphate as cofactor.

It carries out the reaction L-2,4-diaminobutanoate + 2-oxoglutarate = L-aspartate 4-semialdehyde + L-glutamate. Its pathway is amine and polyamine biosynthesis; ectoine biosynthesis; L-ectoine from L-aspartate 4-semialdehyde: step 1/3. Its function is as follows. Catalyzes reversively the conversion of L-aspartate beta-semialdehyde (ASA) to L-2,4-diaminobutyrate (DABA) by transamination with L-glutamate. The polypeptide is Diaminobutyrate--2-oxoglutarate transaminase (ectB) (Streptomyces avermitilis (strain ATCC 31267 / DSM 46492 / JCM 5070 / NBRC 14893 / NCIMB 12804 / NRRL 8165 / MA-4680)).